The primary structure comprises 418 residues: Alpha-tubulin N-acetyltransferase 1 (418 aa).

Residues 1-186 form the N-acetyltransferase domain; that stretch reads MEFEFDVHKI…NNFVVFEGFF (186 aa). Acetyl-CoA is bound by residues 120-133 and 156-165; these read FYIH…GFGK and SEKFLSFLRK. Disordered regions lie at residues 237 to 292 and 322 to 353; these read SSLG…MNLS and QIKE…HQND. Over residues 277 to 287 the composition is skewed to basic and acidic residues; it reads QEDHSQRRRTS. A compositionally biased stretch (polar residues) spans 329 to 353; sequence RTDSSAQEGRTQDRPNGSNSQHQND.

This sequence belongs to the acetyltransferase ATAT1 family.

It localises to the cytoplasm. Its subcellular location is the membrane. The protein resides in the clathrin-coated pit. The protein localises to the cell junction. It is found in the focal adhesion. It localises to the cell projection. Its subcellular location is the axon. The protein resides in the cytoskeleton. The protein localises to the spindle. It carries out the reaction L-lysyl-[alpha-tubulin] + acetyl-CoA = N(6)-acetyl-L-lysyl-[alpha-tubulin] + CoA + H(+). Its function is as follows. Specifically acetylates 'Lys-40' in alpha-tubulin on the lumenal side of microtubules. Promotes microtubule destabilization and accelerates microtubule dynamics; this activity may be independent of acetylation activity. Acetylates alpha-tubulin with a slow enzymatic rate, due to a catalytic site that is not optimized for acetyl transfer. Enters the microtubule through each end and diffuses quickly throughout the lumen of microtubules. Acetylates only long/old microtubules because of its slow acetylation rate since it does not have time to act on dynamically unstable microtubules before the enzyme is released. May be involved in neuron development. In Xenopus laevis (African clawed frog), this protein is Alpha-tubulin N-acetyltransferase 1.